The chain runs to 238 residues: Orotidine 5'-phosphate decarboxylase (238 aa).

Substrate is bound by residues Asp10, Lys32, 59-68, Thr122, Arg184, Gln193, Gly213, and Arg214; that span reads DLKLHDIPNT. The active-site Proton donor is the Lys61.

It belongs to the OMP decarboxylase family. Type 1 subfamily. Homodimer.

It catalyses the reaction orotidine 5'-phosphate + H(+) = UMP + CO2. The protein operates within pyrimidine metabolism; UMP biosynthesis via de novo pathway; UMP from orotate: step 2/2. In terms of biological role, catalyzes the decarboxylation of orotidine 5'-monophosphate (OMP) to uridine 5'-monophosphate (UMP). The chain is Orotidine 5'-phosphate decarboxylase from Bacillus cereus (strain AH187).